The following is a 155-amino-acid chain: Cardioactive peptide (155 aa).

The N-terminal stretch at 1-23 (MRTSMRISLRLLALLACAICSQA) is a signal peptide. The propeptide occupies 24 to 49 (SLERENNEGTNMANHKLSGVIQWKYE). Cysteine 54 and cysteine 60 form a disulfide bridge. Cysteine 60 is subject to Cysteine amide. The propeptide occupies 64–155 (RTYPSYPPFS…MQQLEERESK (92 aa)). The disordered stretch occupies residues 135–155 (NKQKMLQNEKEMQQLEERESK). The span at 141–155 (QNEKEMQQLEERESK) shows a compositional bias: basic and acidic residues.

Central nervous system; most neurons exhibit coexpression with Burs.

Its subcellular location is the secreted. Its function is as follows. Cardioregulatory neurohormone that increases heart beat rate during adult wing inflation; has no effect on beat amplitude. The effect of CCAP is both ino- and chronotropic. In Drosophila melanogaster (Fruit fly), this protein is Cardioactive peptide.